Consider the following 861-residue polypeptide: DNA topoisomerase 1 (861 aa).

A Toprim domain is found at 3-141 (KSLVIVESPA…KFSRVVFNEI (139 aa)). Positions 9 and 110 each coordinate Mg(2+). Positions 157–572 (NMNRVHAQQA…DFFKKFSEQL (416 aa)) constitute a Topo IA-type catalytic domain. The interval 191-196 (SAGRVQ) is interaction with DNA. Tyr318 functions as the O-(5'-phospho-DNA)-tyrosine intermediate in the catalytic mechanism. 3 consecutive C4-type zinc fingers follow at residues 596 to 628 (CPIC…KKRC), 658 to 685 (CDIC…NPSC), and 707 to 732 (CEKC…NKIC).

The protein belongs to the type IA topoisomerase family. Monomer. Mg(2+) is required as a cofactor.

It catalyses the reaction ATP-independent breakage of single-stranded DNA, followed by passage and rejoining.. In terms of biological role, releases the supercoiling and torsional tension of DNA, which is introduced during the DNA replication and transcription, by transiently cleaving and rejoining one strand of the DNA duplex. Introduces a single-strand break via transesterification at a target site in duplex DNA. The scissile phosphodiester is attacked by the catalytic tyrosine of the enzyme, resulting in the formation of a DNA-(5'-phosphotyrosyl)-enzyme intermediate and the expulsion of a 3'-OH DNA strand. The free DNA strand then undergoes passage around the unbroken strand, thus removing DNA supercoils. Finally, in the religation step, the DNA 3'-OH attacks the covalent intermediate to expel the active-site tyrosine and restore the DNA phosphodiester backbone. In Buchnera aphidicola subsp. Acyrthosiphon pisum (strain APS) (Acyrthosiphon pisum symbiotic bacterium), this protein is DNA topoisomerase 1.